The sequence spans 193 residues: Adenylate kinase (193 aa).

10-15 provides a ligand contact to ATP; sequence GAGKGT. An NMP region spans residues 30-59; it reads STGDMLRAAVKAGTPIGLKAKAVMDAGGLV. AMP is bound by residues Thr31, Arg36, 57 to 59, 85 to 88, and Gln92; these read GLV and GFPR. The LID stretch occupies residues 126–142; the sequence is KRAKETLAAGGTVRADD. Arg127 contributes to the ATP binding site. Residues Arg139 and Arg150 each contribute to the AMP site. Residue Ala178 coordinates ATP.

It belongs to the adenylate kinase family. Monomer.

It is found in the cytoplasm. It carries out the reaction AMP + ATP = 2 ADP. The protein operates within purine metabolism; AMP biosynthesis via salvage pathway; AMP from ADP: step 1/1. In terms of biological role, catalyzes the reversible transfer of the terminal phosphate group between ATP and AMP. Plays an important role in cellular energy homeostasis and in adenine nucleotide metabolism. In Beijerinckia indica subsp. indica (strain ATCC 9039 / DSM 1715 / NCIMB 8712), this protein is Adenylate kinase.